The primary structure comprises 332 residues: Phosphate acyltransferase (332 aa).

The protein belongs to the PlsX family. In terms of assembly, homodimer. Probably interacts with PlsY.

The protein localises to the cytoplasm. It catalyses the reaction a fatty acyl-[ACP] + phosphate = an acyl phosphate + holo-[ACP]. The protein operates within lipid metabolism; phospholipid metabolism. Its function is as follows. Catalyzes the reversible formation of acyl-phosphate (acyl-PO(4)) from acyl-[acyl-carrier-protein] (acyl-ACP). This enzyme utilizes acyl-ACP as fatty acyl donor, but not acyl-CoA. This Streptococcus mutans serotype c (strain ATCC 700610 / UA159) protein is Phosphate acyltransferase.